We begin with the raw amino-acid sequence, 100 residues long: Urease subunit gamma (100 aa).

It belongs to the urease gamma subunit family. Heterotrimer of UreA (gamma), UreB (beta) and UreC (alpha) subunits. Three heterotrimers associate to form the active enzyme.

It is found in the cytoplasm. The enzyme catalyses urea + 2 H2O + H(+) = hydrogencarbonate + 2 NH4(+). The protein operates within nitrogen metabolism; urea degradation; CO(2) and NH(3) from urea (urease route): step 1/1. The chain is Urease subunit gamma from Nostoc sp. (strain PCC 7120 / SAG 25.82 / UTEX 2576).